A 2443-amino-acid polypeptide reads, in one-letter code: Spatacsin (2443 aa).

Serine 1955 is subject to Phosphoserine.

Interacts with AP5Z1, AP5B1, AP5S1 and ZFYVE26. As to expression, expressed in all structures of brain, with a high expression in cerebellum. Expressed in cortical projection neurons.

The protein localises to the cytoplasm. The protein resides in the cytosol. It localises to the nucleus. Its subcellular location is the cell projection. It is found in the axon. The protein localises to the dendrite. Its function is as follows. May play a role in neurite plasticity by maintaining cytoskeleton stability and regulating synaptic vesicle transport. This chain is Spatacsin (SPG11), found in Homo sapiens (Human).